We begin with the raw amino-acid sequence, 367 residues long: Choline-phosphate cytidylyltransferase A (367 aa).

Met1 carries the post-translational modification N-acetylmethionine. Residues 1–31 form a disordered region; sequence MDAQSSAKVNSRKRRKEVPGPNGATEEDGIP. Lys8 carries the N6-acetyllysine modification. 4 residues coordinate CTP: Ile84, Phe85, His92, and Lys122. Residues Lys122 and Trp151 each contribute to the phosphocholine site. Residues His168, Asp169, Tyr173, Gln195, Arg196, Thr197, and Ile200 each contribute to the CTP site. Amphipathic regions lie at residues 228 to 287 and 298 to 315; these read KELN…EFIG and ALKH…QAIS. Ser233 bears the Phosphoserine mark. The interval 272–293 is autoinhibitory (AI); sequence IDLIQKWEEKSREFIGSFLEMF. Residues 313-367 form a disordered region; that stretch reads AISPKQSPSSSPTHERSPSPSFRWPFSGKTSPSSSPASLSRCKAVTCDISEDEED. Ser315 carries the phosphoserine; by PKC modification. The span at 315–324 shows a compositional bias: polar residues; that stretch reads SPKQSPSSSP. Phosphoserine is present on residues Ser319, Ser321, Ser322, and Ser323. Copy 1 of the repeat occupies 319-324; sequence SPSSSP. Residues 319–348 form a 3 X repeats region; the sequence is SPSSSPTHERSPSPSFRWPFSGKTSPSSSP. Position 325 is a phosphothreonine (Thr325). Ser329 and Ser331 each carry phosphoserine. A 2; approximate repeat occupies 329 to 333; the sequence is SPSPS. Residues 330-352 are compositionally biased toward low complexity; sequence PSPSFRWPFSGKTSPSSSPASLS. Ser333 is modified (phosphoserine; by PKC). Thr342 carries the phosphothreonine modification. A phosphoserine mark is found at Ser343, Ser345, Ser346, Ser347, Ser350, and Ser352. Repeat 3 spans residues 343–348; it reads SPSSSP. Thr358 bears the Phosphothreonine mark. Ser362 is subject to Phosphoserine; by CK2.

Belongs to the cytidylyltransferase family. Homodimer. In terms of processing, the serine residues of the C-terminus are phosphorylated. The inactive soluble form is stabilized by phosphorylation, the active membrane bound form is promoted by anionic lipids or diacylglycerol, and is stabilized by dephosphorylation. Post-translationally, the N-terminus is blocked. Monoubiquitinated by the SCF(FBXL2) complex, leading to proteasomal degradation.

Its subcellular location is the cytoplasm. The protein localises to the cytosol. It is found in the membrane. It localises to the endoplasmic reticulum membrane. The protein resides in the nucleus. The catalysed reaction is phosphocholine + CTP + H(+) = CDP-choline + diphosphate. It participates in phospholipid metabolism; phosphatidylcholine biosynthesis; phosphatidylcholine from phosphocholine: step 1/2. Its activity is regulated as follows. Interconverts between an inactive cytosolic form and an active membrane-bound form. Activation involves disruption of an inhibitory interaction between helices at the base of the active site and the autoinhibitory (AI) region. Activated by N-methylethanolamine. Activated by oleic acid-containing phosphatidylcholine vesicles. In terms of biological role, catalyzes the key rate-limiting step in the CDP-choline pathway for phosphatidylcholine biosynthesis. In Rattus norvegicus (Rat), this protein is Choline-phosphate cytidylyltransferase A (Pcyt1a).